The following is a 639-amino-acid chain: 3D-(3,5/4)-trihydroxycyclohexane-1,2-dione hydrolase (639 aa).

Glu-62 lines the thiamine diphosphate pocket. Residues 438–518 (SLPGDLQRMW…INILLFDNCG (81 aa)) are thiamine pyrophosphate binding. Residues Asp-489 and Asn-516 each coordinate Mg(2+).

The protein belongs to the TPP enzyme family. The cofactor is Mg(2+). It depends on thiamine diphosphate as a cofactor.

It catalyses the reaction 3D-3,5/4-trihydroxycyclohexane-1,2-dione + H2O = 5-deoxy-D-glucuronate + H(+). It functions in the pathway polyol metabolism; myo-inositol degradation into acetyl-CoA; acetyl-CoA from myo-inositol: step 3/7. Its function is as follows. Involved in the cleavage of the C1-C2 bond of 3D-(3,5/4)-trihydroxycyclohexane-1,2-dione (THcHDO) to yield 5-deoxy-glucuronate (5DG). The protein is 3D-(3,5/4)-trihydroxycyclohexane-1,2-dione hydrolase of Clostridium perfringens (strain ATCC 13124 / DSM 756 / JCM 1290 / NCIMB 6125 / NCTC 8237 / Type A).